The sequence spans 401 residues: 3-oxoadipyl-CoA/3-oxo-5,6-dehydrosuberyl-CoA thiolase (401 aa).

C90 serves as the catalytic Acyl-thioester intermediate. Catalysis depends on proton acceptor residues H357 and C387.

It belongs to the thiolase-like superfamily. Thiolase family.

The catalysed reaction is succinyl-CoA + acetyl-CoA = 3-oxoadipyl-CoA + CoA. It carries out the reaction 2,3-didehydroadipoyl-CoA + acetyl-CoA = 3-oxo-5,6-didehydrosuberyl-CoA + CoA. Its pathway is aromatic compound metabolism; phenylacetate degradation. Its function is as follows. Catalyzes the thiolytic cleavage of the beta-keto C8 intermediate 3-oxo-5,6-dehydrosuberyl-CoA with CoA to yield the C6 intermediate 2,3-dehydroadipyl-CoA and acetyl-CoA. Besides it catalyzes also the last step of the pathway, in which 3-oxoadipyl-CoA similarly is cleaved to acetyl-CoA and succinyl-CoA. In Escherichia coli (strain K12), this protein is 3-oxoadipyl-CoA/3-oxo-5,6-dehydrosuberyl-CoA thiolase (paaJ).